Reading from the N-terminus, the 398-residue chain is Probable aminomethyltransferase (398 aa).

This sequence belongs to the GcvT family. In terms of assembly, the glycine cleavage system is composed of four proteins: P, T, L and H.

It catalyses the reaction N(6)-[(R)-S(8)-aminomethyldihydrolipoyl]-L-lysyl-[protein] + (6S)-5,6,7,8-tetrahydrofolate = N(6)-[(R)-dihydrolipoyl]-L-lysyl-[protein] + (6R)-5,10-methylene-5,6,7,8-tetrahydrofolate + NH4(+). In terms of biological role, the glycine cleavage system catalyzes the degradation of glycine. In Pyrococcus horikoshii (strain ATCC 700860 / DSM 12428 / JCM 9974 / NBRC 100139 / OT-3), this protein is Probable aminomethyltransferase.